Consider the following 136-residue polypeptide: Ribonuclease P protein component (136 aa).

The segment at 116-136 is disordered; it reads RPQRAAAKGSAGTTQKGTPRA. Polar residues predominate over residues 126-136; sequence AGTTQKGTPRA.

This sequence belongs to the RnpA family. In terms of assembly, consists of a catalytic RNA component (M1 or rnpB) and a protein subunit.

The enzyme catalyses Endonucleolytic cleavage of RNA, removing 5'-extranucleotides from tRNA precursor.. Functionally, RNaseP catalyzes the removal of the 5'-leader sequence from pre-tRNA to produce the mature 5'-terminus. It can also cleave other RNA substrates such as 4.5S RNA. The protein component plays an auxiliary but essential role in vivo by binding to the 5'-leader sequence and broadening the substrate specificity of the ribozyme. In Pseudarthrobacter chlorophenolicus (strain ATCC 700700 / DSM 12829 / CIP 107037 / JCM 12360 / KCTC 9906 / NCIMB 13794 / A6) (Arthrobacter chlorophenolicus), this protein is Ribonuclease P protein component.